Consider the following 387-residue polypeptide: Succinate--CoA ligase [ADP-forming] subunit beta (387 aa).

The 228-residue stretch at 9–236 folds into the ATP-grasp domain; it reads RDLFEKYGVP…KAAADPLEAK (228 aa). Residues lysine 45, 52–54, alanine 94, and glutamate 99 each bind ATP; that span reads GRG. Asparagine 191 and aspartate 205 together coordinate Mg(2+). Residues asparagine 256 and 318–320 contribute to the substrate site; that span reads GIT.

Belongs to the succinate/malate CoA ligase beta subunit family. In terms of assembly, heterotetramer of two alpha and two beta subunits. Requires Mg(2+) as cofactor.

It catalyses the reaction succinate + ATP + CoA = succinyl-CoA + ADP + phosphate. The catalysed reaction is GTP + succinate + CoA = succinyl-CoA + GDP + phosphate. It functions in the pathway carbohydrate metabolism; tricarboxylic acid cycle; succinate from succinyl-CoA (ligase route): step 1/1. Succinyl-CoA synthetase functions in the citric acid cycle (TCA), coupling the hydrolysis of succinyl-CoA to the synthesis of either ATP or GTP and thus represents the only step of substrate-level phosphorylation in the TCA. The beta subunit provides nucleotide specificity of the enzyme and binds the substrate succinate, while the binding sites for coenzyme A and phosphate are found in the alpha subunit. The polypeptide is Succinate--CoA ligase [ADP-forming] subunit beta (Leifsonia xyli subsp. xyli (strain CTCB07)).